The sequence spans 395 residues: Protein PIN-LIKES 7 (395 aa).

Over M1 to E8 the chain is Lumenal. A helical transmembrane segment spans residues V9–T29. Residues D30–K45 lie on the Cytoplasmic side of the membrane. A helical transmembrane segment spans residues L46–L66. The Lumenal segment spans residues Q67 to W73. A helical transmembrane segment spans residues F74–V94. The Cytoplasmic segment spans residues K95 to L106. Residues I107–I127 traverse the membrane as a helical segment. Over C128–R142 the chain is Lumenal. Residues S143–Y163 form a helical membrane-spanning segment. The Cytoplasmic portion of the chain corresponds to S164–E232. Residues L233–L253 form a helical membrane-spanning segment. Topologically, residues R254–K272 are lumenal. Residues L273–G293 traverse the membrane as a helical segment. Residues L294–S302 lie on the Cytoplasmic side of the membrane. The chain crosses the membrane as a helical span at residues V303–V323. Topologically, residues Q324–Y340 are lumenal. A helical membrane pass occupies residues V341–F361. The Cytoplasmic segment spans residues D362–S369. Residues V370–F390 traverse the membrane as a helical segment. Residues L391–S395 lie on the Lumenal side of the membrane.

This sequence belongs to the auxin efflux carrier (TC 2.A.69.2) family. As to expression, expressed in seedlings, rosette and cauline leaves, stems and flowers.

It is found in the endoplasmic reticulum membrane. Its function is as follows. Involved in cellular auxin homeostasis by regulating auxin metabolism. Regulates intracellular auxin accumulation at the endoplasmic reticulum and thus auxin availability for nuclear auxin signaling. This Arabidopsis thaliana (Mouse-ear cress) protein is Protein PIN-LIKES 7.